A 317-amino-acid polypeptide reads, in one-letter code: Putative HTH-type transcriptional regulatory protein Mlab_0160 (317 aa).

The HTH cro/C1-type domain maps to 132-189 (LRTLREEQAMSLGDLAHALGVSRRTISKYEGGMGTTLEMAMRLEEFFNDDIVMPIDLL). The segment at residues 143-162 (LGDLAHALGVSRRTISKYEG) is a DNA-binding region (H-T-H motif). A disordered region spans residues 199–219 (VPASLASGHNPESDAQPKRPE). Residues 209–219 (PESDAQPKRPE) are compositionally biased toward basic and acidic residues.

The protein is Putative HTH-type transcriptional regulatory protein Mlab_0160 of Methanocorpusculum labreanum (strain ATCC 43576 / DSM 4855 / Z).